Reading from the N-terminus, the 319-residue chain is Transaldolase (319 aa).

The Schiff-base intermediate with substrate role is filled by K132.

Belongs to the transaldolase family. Type 1 subfamily. In terms of assembly, homodimer.

The protein resides in the cytoplasm. The catalysed reaction is D-sedoheptulose 7-phosphate + D-glyceraldehyde 3-phosphate = D-erythrose 4-phosphate + beta-D-fructose 6-phosphate. It participates in carbohydrate degradation; pentose phosphate pathway; D-glyceraldehyde 3-phosphate and beta-D-fructose 6-phosphate from D-ribose 5-phosphate and D-xylulose 5-phosphate (non-oxidative stage): step 2/3. In terms of biological role, transaldolase is important for the balance of metabolites in the pentose-phosphate pathway. In Alteromonas mediterranea (strain DSM 17117 / CIP 110805 / LMG 28347 / Deep ecotype), this protein is Transaldolase.